Reading from the N-terminus, the 619-residue chain is HAUS augmin-like complex subunit 5 (619 aa).

An N-acetylmethionine modification is found at Met1. Coiled coils occupy residues 73-108 (KIHR…SEAQ), 310-395 (ALLS…LVED), and 550-590 (ELLQ…LQGI).

Belongs to the HAUS5 family. As to quaternary structure, component of the HAUS augmin-like complex. The complex interacts with the gamma-tubulin ring complex and this interaction is required for spindle assembly. Interacts with EML3 (phosphorylated at 'Thr-882').

It localises to the cytoplasm. The protein resides in the cytoskeleton. The protein localises to the microtubule organizing center. It is found in the centrosome. Its subcellular location is the spindle. Functionally, contributes to mitotic spindle assembly, maintenance of centrosome integrity and completion of cytokinesis as part of the HAUS augmin-like complex. This Mus musculus (Mouse) protein is HAUS augmin-like complex subunit 5 (Haus5).